We begin with the raw amino-acid sequence, 551 residues long: Glucose-6-phosphate isomerase (551 aa).

Residue Glu-356 is the Proton donor of the active site. Residues His-387 and Lys-515 contribute to the active site.

The protein belongs to the GPI family.

The protein resides in the cytoplasm. The catalysed reaction is alpha-D-glucose 6-phosphate = beta-D-fructose 6-phosphate. It participates in carbohydrate biosynthesis; gluconeogenesis. It functions in the pathway carbohydrate degradation; glycolysis; D-glyceraldehyde 3-phosphate and glycerone phosphate from D-glucose: step 2/4. Functionally, catalyzes the reversible isomerization of glucose-6-phosphate to fructose-6-phosphate. The sequence is that of Glucose-6-phosphate isomerase from Blochmanniella pennsylvanica (strain BPEN).